A 144-amino-acid polypeptide reads, in one-letter code: DNA-directed RNA polymerases II and V subunit 6B (144 aa).

The segment covering 1 to 32 (MADDDYNEVDDLGYEDEPAEPEIEEGVEEDAD) has biased composition (acidic residues). Residues 1-62 (MADDDYNEVD…EPVQRPRKTS (62 aa)) form a disordered region. Over residues 46 to 56 (TEDKVETEPVQ) the composition is skewed to basic and acidic residues.

The protein belongs to the archaeal Rpo6/eukaryotic RPB6 RNA polymerase subunit family. In terms of assembly, component of the RNA polymerase II and V complexes.

It is found in the nucleus. In terms of biological role, DNA-dependent RNA polymerase catalyzes the transcription of DNA into RNA using the four ribonucleoside triphosphates as substrates. Component of RNA polymerase II which synthesizes mRNA precursors and many functional non-coding RNAs. Pol II is the central component of the basal RNA polymerase II transcription machinery. It is composed of mobile elements that move relative to each other. Component of RNA polymerase V which mediates RNA-directed DNA methylation-dependent (RdDM) transcriptional gene silencing (TGS) of endogenous repeated sequences, including transposable elements. The sequence is that of DNA-directed RNA polymerases II and V subunit 6B (NRPB6B) from Arabidopsis thaliana (Mouse-ear cress).